The chain runs to 786 residues: MNLSNKELEGLDEIISDHREDFCPFLGRIEEEDKQFFLSSEMKEMYAGDTVPDFIASLQEAVKMPGQIYFATRASIGEWAFVTVFTDTLDYMEVSPTEYQEAKEKTVLGENAAWMPSVDLKPFNRDFPKPSSADFIGKGVEFLNRHQSSRIFMNPEKGLKQLLDFLRVHKYDGRQLMLNNRIDSVDKLKKALKKAQALLKNKSDETEWEEVESDMAHLGFEPGWGKKLGYVKEFLALLSDILAAPEPVVLEKFLDRIPMIFSLVVLSPHGFFGQAGVFGKPDTGGQVVYILDQVKALEHELKSRLDEKGLDITPKILVVTRLIPEAEGTNCDMEEELIRGTDNCHIVRVPFRDESGEVVRQWISRFRIWPYLERFSTEAQNIILSKLQGNPDLIIGNYSDGNLVASLIAQRLGVTQCTIAHALEKTKYLYSDLYWQDNNDKYHFACQYTADLISMNYSDFIITSTYQEIAGTNDSVGQYESYMNYTLPGLYRVVNGIDVFDPKFNVVSPGAAPDIFFSYKSKDRFPEHIEEIESILFEDNLEGSRGSLADPDKPLIFTMARLDKIKNLTGLVRWFGENEELRKTANLLVIGGFVDESLSSDDEEREQIRIMHSVIDELGLDGSVRWVGAHLGKRMTGEFYRYVADRKGVFVQPALFEAFGLTIIEAMSSGLPVFATVYGGPSEIIEDGKSGFTLDPNKGDECAEKLLEFIQKCQSDPGHWIKISDNALKRVEERYNWPLYAKRLMTFARVYGFWKFVTNLEREETVRYLEMLYGMVYRRLADPKEY.

The interval 259 to 736 is GT-B glycosyltransferase; the sequence is MIFSLVVLSP…ALKRVEERYN (478 aa).

Belongs to the glycosyltransferase 1 family. As to quaternary structure, homotetramer.

The enzyme catalyses an NDP-alpha-D-glucose + D-fructose = a ribonucleoside 5'-diphosphate + sucrose + H(+). Catalyzes the reversible conversion of sucrose and a nucleotide disphosphate (NDP) into fructose and NDP-glucose; although the reaction is freely reversible in vitro, the physiological reaction seems to be sucrose cleavage. Unlike characterized plant enzymes prefers ADP as a cosubstrate, whereas plants prefer UDP. Its preference for ADP over UDP suggests it may directly link sucrose and glycogen metabolism. In Denitrovibrio acetiphilus (strain DSM 12809 / NBRC 114555 / N2460), this protein is Sucrose synthase.